We begin with the raw amino-acid sequence, 216 residues long: Uracil phosphoribosyltransferase (216 aa).

30-34 (KNLVR) lines the GTP pocket. Residues R80, R105, and 140–148 (DPMIATAST) each bind 5-phospho-alpha-D-ribose 1-diphosphate. Uracil-binding positions include I203 and 208–210 (GDA). A 5-phospho-alpha-D-ribose 1-diphosphate-binding site is contributed by D209.

It belongs to the UPRTase family. Requires Mg(2+) as cofactor.

It catalyses the reaction UMP + diphosphate = 5-phospho-alpha-D-ribose 1-diphosphate + uracil. It participates in pyrimidine metabolism; UMP biosynthesis via salvage pathway; UMP from uracil: step 1/1. Allosterically activated by GTP. Catalyzes the conversion of uracil and 5-phospho-alpha-D-ribose 1-diphosphate (PRPP) to UMP and diphosphate. The protein is Uracil phosphoribosyltransferase of Saccharolobus islandicus (strain Y.N.15.51 / Yellowstone #2) (Sulfolobus islandicus).